The sequence spans 310 residues: Metal ABC transporter substrate-binding lipoprotein ScbA (310 aa).

The N-terminal stretch at 1-19 (MKKCRFLVLLLLAFVGLAA) is a signal peptide. Cysteine 20 carries the N-palmitoyl cysteine lipid modification. Residue cysteine 20 is the site of S-diacylglycerol cysteine attachment. A divalent metal cation contacts are provided by histidine 68, histidine 140, glutamate 206, and aspartate 281.

This sequence belongs to the bacterial solute-binding protein 9 family.

The protein localises to the cell membrane. Functionally, part of an ATP-binding cassette (ABC) transport system involved in metal import. Binds a metal with high affinity and specificity and delivers it to the membrane permease for translocation into the cytoplasm. Part of an ATP-driven transport system for manganese. Does not exhibit adhesion properties. The chain is Metal ABC transporter substrate-binding lipoprotein ScbA (scbA) from Streptococcus cristatus.